We begin with the raw amino-acid sequence, 466 residues long: Ribulose bisphosphate carboxylase large chain (466 aa).

Lys5 carries the N6,N6,N6-trimethyllysine modification. The substrate site is built by Asn114 and Thr164. The Proton acceptor role is filled by Lys166. Lys168 contacts substrate. Residues Lys192, Asp194, and Glu195 each contribute to the Mg(2+) site. Lys192 carries the post-translational modification N6-carboxylysine. Catalysis depends on His285, which acts as the Proton acceptor. Substrate contacts are provided by Arg286, His318, and Ser370.

The protein belongs to the RuBisCO large chain family. Type I subfamily. In terms of assembly, heterohexadecamer of 8 large chains and 8 small chains; disulfide-linked. The disulfide link is formed within the large subunit homodimers. Mg(2+) serves as cofactor. Post-translationally, the disulfide bond which can form in the large chain dimeric partners within the hexadecamer appears to be associated with oxidative stress and protein turnover.

Its subcellular location is the plastid. It is found in the chloroplast. The enzyme catalyses 2 (2R)-3-phosphoglycerate + 2 H(+) = D-ribulose 1,5-bisphosphate + CO2 + H2O. It carries out the reaction D-ribulose 1,5-bisphosphate + O2 = 2-phosphoglycolate + (2R)-3-phosphoglycerate + 2 H(+). Functionally, ruBisCO catalyzes two reactions: the carboxylation of D-ribulose 1,5-bisphosphate, the primary event in carbon dioxide fixation, as well as the oxidative fragmentation of the pentose substrate in the photorespiration process. Both reactions occur simultaneously and in competition at the same active site. The protein is Ribulose bisphosphate carboxylase large chain of Vitis aestivalis (Grape).